A 375-amino-acid polypeptide reads, in one-letter code: Alpha-2,8-sialyltransferase 8B (375 aa).

Topologically, residues 1–6 (MQLQFR) are cytoplasmic. Residues 7–23 (SWMLAALTLLVVFLIFA) traverse the membrane as a helical; Signal-anchor for type II membrane protein segment. At 24–375 (DISEIEEEIG…LTVGQCDGAT (352 aa)) the chain is on the lumenal side. N-linked (GlcNAc...) asparagine glycans are attached at residues Asn60, Asn72, Asn89, and Asn134. Cystine bridges form between Cys157–Cys307 and Cys171–Cys371. Asn162 and Asn185 together coordinate CMP-N-acetyl-beta-neuraminate. Residues Asn219 and Asn234 are each glycosylated (N-linked (GlcNAc...) asparagine). CMP-N-acetyl-beta-neuraminate is bound by residues Thr294, Thr295, Gly296, Trp316, Tyr329, and His330. The active-site Proton donor/acceptor is His346.

Belongs to the glycosyltransferase 29 family. Autopolysialylated. Autopolysialylation is not a prerequisite for the polysialylation acitity, but enhances the polysialylation acitity. In terms of tissue distribution, expressed only in newborn brain.

The protein resides in the golgi apparatus membrane. The protein localises to the secreted. Its subcellular location is the cell membrane. It carries out the reaction [N-acetyl-alpha-D-neuraminosyl-(2-&gt;8)](n) + CMP-N-acetyl-beta-neuraminate = [N-acetyl-alpha-D-neuraminosyl-(2-&gt;8)](n+1) + CMP + H(+). The protein operates within protein modification; protein glycosylation. Functionally, catalyzes the transfer of a sialic acid from a CMP-linked sialic acid donor onto a terminal alpha-2,3-, alpha-2,6-, or alpha-2,8-linked sialic acid of an N-linked glycan acceptor through alpha-2,8-linkages. Therefore, participates in polysialic acid synthesis on various sialylated N-acetyllactosaminyl oligosaccharides (alpha-2,3-, alpha-2,6-, or alpha-2,8-linked sialic acid), including NCAM1, NCAM1 N-glycans, FETUB N-glycans, and to a lesser extent sialylparagloboside (SPG) and AHSG, which does not require the initial addition of an alpha 2,8-sialic acid. However, does not exhibit sialic acid-polymerase activity. Catalyzes polysialic acid synthesis in the hippocampal on NCAM1 and supports neurite outgrowth. ST8SIA2-mediated polysialylation influences on oligodendrocyte differentiation and may promote the integrity of myelin and axons. This Rattus norvegicus (Rat) protein is Alpha-2,8-sialyltransferase 8B.